We begin with the raw amino-acid sequence, 167 residues long: Photosystem I assembly protein Ycf3 (167 aa).

TPR repeat units follow at residues Ala35–Pro68, Ser72–Leu105, and Gly120–Asn153.

The protein belongs to the Ycf3 family.

Its subcellular location is the plastid. It is found in the chloroplast thylakoid membrane. Functionally, essential for the assembly of the photosystem I (PSI) complex. May act as a chaperone-like factor to guide the assembly of the PSI subunits. This chain is Photosystem I assembly protein Ycf3, found in Chara vulgaris (Common stonewort).